Reading from the N-terminus, the 392-residue chain is Methylthioribose kinase (392 aa).

Residues asparagine 38, lysine 53, and 107 to 109 (EDL) contribute to the ATP site. Aspartate 225 contributes to the substrate binding site. An ATP-binding site is contributed by 242–244 (DPE). Residue arginine 332 coordinates substrate.

Belongs to the methylthioribose kinase family. In terms of assembly, homodimer.

It catalyses the reaction 5-(methylsulfanyl)-D-ribose + ATP = 5-(methylsulfanyl)-alpha-D-ribose 1-phosphate + ADP + H(+). The protein operates within amino-acid biosynthesis; L-methionine biosynthesis via salvage pathway; S-methyl-5-thio-alpha-D-ribose 1-phosphate from S-methyl-5'-thioadenosine (hydrolase route): step 2/2. Catalyzes the phosphorylation of methylthioribose into methylthioribose-1-phosphate. In Bacillus mycoides (strain KBAB4) (Bacillus weihenstephanensis), this protein is Methylthioribose kinase.